The primary structure comprises 96 residues: Small, acid-soluble spore protein gamma-type (96 aa).

Over residues 1–15 the composition is skewed to polar residues; it reads MNTKNFTPQESRTNA. Residues 1-96 form a disordered region; the sequence is MNTKNFTPQE…SEAKKRNNQQ (96 aa). Low complexity predominate over residues 16 to 27; that stretch reads QQVRQQNQQSAQ. Residues 28-41 are compositionally biased toward polar residues; it reads GTSSGFATEFASET. 2 repeats span residues 28-52 and 61-87; these read GTSS…QNQQ and GATA…NQQS. Composition is skewed to low complexity over residues 42-57 and 76-86; these read NAQQ…AQAN and NVQQVRQQNQQ.

The protein belongs to the gamma-type SASP family.

SASP are proteins degraded in the first minutes of spore germination and provide amino acids for both new protein synthesis and metabolism. These proteins may be involved in dormant spore's high resistance to UV light. The polypeptide is Small, acid-soluble spore protein gamma-type (Laceyella sacchari (Thermoactinomyces thalpophilus)).